The chain runs to 153 residues: 6,7-dimethyl-8-ribityllumazine synthase (153 aa).

Residues phenylalanine 21, 55–57 (AFE), and 79–81 (TVI) each bind 5-amino-6-(D-ribitylamino)uracil. 84-85 (AT) is a (2S)-2-hydroxy-3-oxobutyl phosphate binding site. Catalysis depends on histidine 87, which acts as the Proton donor. 5-amino-6-(D-ribitylamino)uracil is bound at residue phenylalanine 112. Arginine 126 is a binding site for (2S)-2-hydroxy-3-oxobutyl phosphate.

This sequence belongs to the DMRL synthase family. As to quaternary structure, forms an icosahedral capsid composed of 60 subunits, arranged as a dodecamer of pentamers.

It catalyses the reaction (2S)-2-hydroxy-3-oxobutyl phosphate + 5-amino-6-(D-ribitylamino)uracil = 6,7-dimethyl-8-(1-D-ribityl)lumazine + phosphate + 2 H2O + H(+). It participates in cofactor biosynthesis; riboflavin biosynthesis; riboflavin from 2-hydroxy-3-oxobutyl phosphate and 5-amino-6-(D-ribitylamino)uracil: step 1/2. Functionally, catalyzes the formation of 6,7-dimethyl-8-ribityllumazine by condensation of 5-amino-6-(D-ribitylamino)uracil with 3,4-dihydroxy-2-butanone 4-phosphate. This is the penultimate step in the biosynthesis of riboflavin. This Bacillus cereus (strain G9842) protein is 6,7-dimethyl-8-ribityllumazine synthase.